The following is a 284-amino-acid chain: NAD kinase (284 aa).

The active-site Proton acceptor is D70. NAD(+) is bound by residues 70 to 71, 139 to 140, K167, D169, L177, 180 to 185, and Q236; these read DG, NE, and TAYNLS.

It belongs to the NAD kinase family. Requires a divalent metal cation as cofactor.

Its subcellular location is the cytoplasm. The catalysed reaction is NAD(+) + ATP = ADP + NADP(+) + H(+). In terms of biological role, involved in the regulation of the intracellular balance of NAD and NADP, and is a key enzyme in the biosynthesis of NADP. Catalyzes specifically the phosphorylation on 2'-hydroxyl of the adenosine moiety of NAD to yield NADP. The protein is NAD kinase of Helicobacter pylori (strain P12).